Reading from the N-terminus, the 222-residue chain is Putative germin-like protein subfamily 1 member 9 (222 aa).

An N-terminal signal peptide occupies residues 1-22; it reads MKSFSFLAVLSILAITLSLSKA. Cys-32 and Cys-49 form a disulfide bridge. The Cupin type-1 domain maps to 63–213; sequence TGLHEARPPN…AFQVDPKIVM (151 aa). The N-linked (GlcNAc...) asparagine glycan is linked to Asn-78. Residues His-111, His-113, Glu-118, and His-159 each contribute to the Mn(2+) site.

The protein belongs to the germin family. Oligomer (believed to be a pentamer but probably hexamer).

It localises to the secreted. The protein resides in the extracellular space. It is found in the apoplast. In terms of biological role, may play a role in plant defense. Probably has no oxalate oxidase activity even if the active site is conserved. In Arabidopsis thaliana (Mouse-ear cress), this protein is Putative germin-like protein subfamily 1 member 9.